The chain runs to 67 residues: Conotoxin Cp1.1 (67 aa).

Residues 1-26 form the signal peptide; sequence MMFRLTSVSCFLLVIACLNLFQVVLT. Intrachain disulfides connect cysteine 29–cysteine 43, cysteine 36–cysteine 48, cysteine 42–cysteine 52, and cysteine 47–cysteine 56. Tyrosine 60 carries the tyrosine amide modification. A propeptide spanning residues 64–67 is cleaved from the precursor; the sequence is ATFQ.

Belongs to the conotoxin I2 superfamily. Expressed by the venom duct.

The protein resides in the secreted. The polypeptide is Conotoxin Cp1.1 (Conus capitaneus (Captain cone)).